Here is a 381-residue protein sequence, read N- to C-terminus: MSWTVPVVRASQRVSSVGANFLCLGMALCPRQATRIPLNGTWLFTPVSKMATVKSELIERFTSEKPVHHSKVSIIGTGSVGMACAISILLKGLSDELALVDLDEDKLKGETMDLQHGSPFTKMPNIVCSKDYFVTANSNLVIITAGARQEKGETRLNLVQRNVAIFKLMISSIVQYSPHCKLIIVSNPVDILTYVAWKLSAFPKNRIIGSGCNLDTARFRFLIGQKLGIHSESCHGWILGEHGDSSVPVWSGVNIAGVPLKDLNSDIGTDKDPEQWKNVHKEVTATAYEIIKMKGYTSWAIGLSVADLTESILKNLRRIHPVSTIIKGLYGIDEEVFLSIPCILGENGITNLIKIKLTPEEEAHLKKSAKTLWEIQNKLKL.

Residues 101–106 and Arg148 each bind NAD(+); that span reads DLDEDK. Substrate contacts are provided by Arg155, Asn187, and Arg218. NAD(+) is bound at residue Asn187. His242 acts as the Proton acceptor in catalysis. Thr297 serves as a coordination point for substrate.

It belongs to the LDH/MDH superfamily. LDH family. Testis specific.

The catalysed reaction is (S)-lactate + NAD(+) = pyruvate + NADH + H(+). It functions in the pathway fermentation; pyruvate fermentation to lactate; (S)-lactate from pyruvate: step 1/1. This is L-lactate dehydrogenase A-like 6B (LDHAL6B) from Homo sapiens (Human).